Consider the following 36-residue polypeptide: Lambda-hexatoxin-Hv1b (36 aa).

4 disulfides stabilise this stretch: Cys3/Cys17, Cys10/Cys22, Cys13/Cys14, and Cys16/Cys33.

It belongs to the neurotoxin 11 (kappa toxin) family. In terms of tissue distribution, expressed by the venom gland.

It localises to the secreted. This excitatory toxin inhibits insect calcium-activated potassium (KCa) channels (Slo-type). The polypeptide is Lambda-hexatoxin-Hv1b (Hadronyche versuta (Blue mountains funnel-web spider)).